A 714-amino-acid chain; its full sequence is BRCA1-associated RING domain protein 1 (714 aa).

The RING-type zinc finger occupies 25-63 (CPLCLKLLNRPVLLPCDHVFCDSCVHKSSQVESGCPVCK). Disordered regions lie at residues 106 to 165 (YKND…QDWT) and 254 to 283 (KAQN…DAME). Basic and acidic residues predominate over residues 118–134 (KHGESEDSEMTDKDVSK). The span at 135-147 (RSGGTDSSSRDGS) shows a compositional bias: low complexity. Basic and acidic residues-rich tracts occupy residues 155–165 (SDPRPKHQDWT) and 264–283 (SHTE…DAME). The C2HC pre-PHD-type zinc finger occupies 331–382 (ITICGFCQSARVSEATGEMLHYSRGRPVDGDDIFRSNVIHVHSACIEWAPQV). A PHD-type zinc finger spans residues 402 to 451 (IKCTKCSLKGAALGCFVKSCRRSYHVPCAREISRCRWDYEDFLLLCPAHS). BRCT domains are found at residues 482–577 (EQTP…PFEI) and 598–713 (NKPK…HPVI).

As to quaternary structure, component of a DNA-protein complex on WUS and WOX5 promoters. Interacts with SYD. Forms heterodimer with BRCA1. As to expression, expressed in the shoot apical meristem (SAM), roots, flowers, embryos and seedlings. Mostly expressed in flowers and siliques, and, to a lower extent, in roots, rosette leaves, inflorescence and young cauline leaves.

It is found in the nucleus. Functionally, binds specifically to H3K4me3 regions of target genes (e.g. WUS and WOX5) promoters to repress their transcription via chromatin remodeling. Required for the shoot apical meristem (SAM) organization and maintenance, by confining WUS expression to the organizing center, and for the quiescent center (QC) development in the root apical meristem (RAM), by repressing WOX5 expression in the root proximal meristem. Plays a role in DNA repair and in cell-cycle control. Required for the repair of DNA double-strand breaks (DSBs), both natural and induced by genotoxic stress, by homologous recombination (HR). The protein is BRCA1-associated RING domain protein 1 of Arabidopsis thaliana (Mouse-ear cress).